The primary structure comprises 179 residues: Endoribonuclease YbeY (179 aa).

Zn(2+)-binding residues include H148, H152, and H158.

It belongs to the endoribonuclease YbeY family. The cofactor is Zn(2+).

The protein resides in the cytoplasm. Functionally, single strand-specific metallo-endoribonuclease involved in late-stage 70S ribosome quality control and in maturation of the 3' terminus of the 16S rRNA. The polypeptide is Endoribonuclease YbeY (Prochlorococcus marinus (strain MIT 9215)).